A 273-amino-acid chain; its full sequence is MPLSTSLLGKTSTYKDSYDATLLFKIPRINNRNALGINSNNLPFYGVDIWNTYELSCINKKGKPWVGVGTFYIPTDSENIVESKSFKLYLNSFNNFVVESVEELERIILQDLSNVTHAKVTGRIFPINTKIAFGVPSGKNIDALDIVCNNYGPPDNSLVEYEEVLVEEEINSNLLKSNCLVTGQPDWGSIVIKYKGKKLKHDSFLKYLISFRNYHEFAEQCAERIFTDIKNAIKPDFLSLYIVYTRRGGIDICPYRSTDKSYSLPSDKRLIRQ.

81-83 lines the substrate pocket; sequence VES. 83-84 provides a ligand contact to NADPH; that stretch reads SK. Cysteine 179 (thioimide intermediate) is an active-site residue. Aspartate 186 acts as the Proton donor in catalysis. 218 to 219 contacts substrate; the sequence is AE. Residue 247–248 participates in NADPH binding; that stretch reads RG.

The protein belongs to the GTP cyclohydrolase I family. QueF type 2 subfamily. Homodimer.

It localises to the cytoplasm. The catalysed reaction is 7-aminomethyl-7-carbaguanine + 2 NADP(+) = 7-cyano-7-deazaguanine + 2 NADPH + 3 H(+). It functions in the pathway tRNA modification; tRNA-queuosine biosynthesis. In terms of biological role, catalyzes the NADPH-dependent reduction of 7-cyano-7-deazaguanine (preQ0) to 7-aminomethyl-7-deazaguanine (preQ1). The polypeptide is NADPH-dependent 7-cyano-7-deazaguanine reductase (Rickettsia akari (strain Hartford)).